A 114-amino-acid polypeptide reads, in one-letter code: Fluoride-specific ion channel FluC 1 (114 aa).

4 helical membrane-spanning segments follow: residues 3–23, 30–50, 55–75, and 87–107; these read IDIK…GALF, IFIV…LNIL, LTLC…MSHL, and FLLN…LGHI. Residues G63 and T66 each contribute to the Na(+) site.

Belongs to the fluoride channel Fluc/FEX (TC 1.A.43) family.

Its subcellular location is the cell inner membrane. It catalyses the reaction fluoride(in) = fluoride(out). Its activity is regulated as follows. Na(+) is not transported, but it plays an essential structural role and its presence is essential for fluoride channel function. Fluoride-specific ion channel. Important for reducing fluoride concentration in the cell, thus reducing its toxicity. This is Fluoride-specific ion channel FluC 1 from Prochlorococcus marinus (strain NATL2A).